Consider the following 68-residue polypeptide: Cytochrome c3 (68 aa).

The heme site is built by His-17, His-20, Cys-26, Cys-29, His-30, His-45, Cys-49, Cys-52, His-53, Cys-62, Cys-65, and His-66.

In terms of processing, binds 3 heme groups per subunit.

Its function is as follows. Participates in sulfate respiration coupled with phosphorylation by transferring electrons from the enzyme dehydrogenase to ferredoxin. The polypeptide is Cytochrome c3 (cyd) (Desulfuromonas acetoxidans (Chloropseudomonas ethylica)).